Reading from the N-terminus, the 162-residue chain is Ribosome maturation factor RimP (162 aa).

Belongs to the RimP family.

It is found in the cytoplasm. In terms of biological role, required for maturation of 30S ribosomal subunits. The chain is Ribosome maturation factor RimP from Cupriavidus taiwanensis (strain DSM 17343 / BCRC 17206 / CCUG 44338 / CIP 107171 / LMG 19424 / R1) (Ralstonia taiwanensis (strain LMG 19424)).